The following is a 159-amino-acid chain: ATP synthase subunit b (159 aa).

A helical membrane pass occupies residues N2–V22.

This sequence belongs to the ATPase B chain family. In terms of assembly, F-type ATPases have 2 components, F(1) - the catalytic core - and F(0) - the membrane proton channel. F(1) has five subunits: alpha(3), beta(3), gamma(1), delta(1), epsilon(1). F(0) has three main subunits: a(1), b(2) and c(10-14). The alpha and beta chains form an alternating ring which encloses part of the gamma chain. F(1) is attached to F(0) by a central stalk formed by the gamma and epsilon chains, while a peripheral stalk is formed by the delta and b chains.

It is found in the cell membrane. F(1)F(0) ATP synthase produces ATP from ADP in the presence of a proton or sodium gradient. F-type ATPases consist of two structural domains, F(1) containing the extramembraneous catalytic core and F(0) containing the membrane proton channel, linked together by a central stalk and a peripheral stalk. During catalysis, ATP synthesis in the catalytic domain of F(1) is coupled via a rotary mechanism of the central stalk subunits to proton translocation. In terms of biological role, component of the F(0) channel, it forms part of the peripheral stalk, linking F(1) to F(0). This Clostridium botulinum (strain Okra / Type B1) protein is ATP synthase subunit b.